The following is a 252-amino-acid chain: Triosephosphate isomerase (252 aa).

9–11 provides a ligand contact to substrate; that stretch reads NWK. Residue His-95 is the Electrophile of the active site. Catalysis depends on Glu-167, which acts as the Proton acceptor. Substrate-binding positions include Gly-173, Ser-211, and 232 to 233; that span reads GG.

Belongs to the triosephosphate isomerase family. As to quaternary structure, homodimer.

Its subcellular location is the cytoplasm. It catalyses the reaction D-glyceraldehyde 3-phosphate = dihydroxyacetone phosphate. It participates in carbohydrate biosynthesis; gluconeogenesis. It functions in the pathway carbohydrate degradation; glycolysis; D-glyceraldehyde 3-phosphate from glycerone phosphate: step 1/1. Its function is as follows. Involved in the gluconeogenesis. Catalyzes stereospecifically the conversion of dihydroxyacetone phosphate (DHAP) to D-glyceraldehyde-3-phosphate (G3P). The polypeptide is Triosephosphate isomerase (Marinobacter nauticus (strain ATCC 700491 / DSM 11845 / VT8) (Marinobacter aquaeolei)).